We begin with the raw amino-acid sequence, 103 residues long: Large ribosomal subunit protein bL21 (103 aa).

It belongs to the bacterial ribosomal protein bL21 family. Part of the 50S ribosomal subunit. Contacts protein L20.

Its function is as follows. This protein binds to 23S rRNA in the presence of protein L20. This chain is Large ribosomal subunit protein bL21, found in Pseudomonas paraeruginosa (strain DSM 24068 / PA7) (Pseudomonas aeruginosa (strain PA7)).